We begin with the raw amino-acid sequence, 245 residues long: 1-(5-phosphoribosyl)-5-[(5-phosphoribosylamino)methylideneamino] imidazole-4-carboxamide isomerase (245 aa).

Catalysis depends on D8, which acts as the Proton acceptor. The Proton donor role is filled by D130.

This sequence belongs to the HisA/HisF family.

Its subcellular location is the cytoplasm. It catalyses the reaction 1-(5-phospho-beta-D-ribosyl)-5-[(5-phospho-beta-D-ribosylamino)methylideneamino]imidazole-4-carboxamide = 5-[(5-phospho-1-deoxy-D-ribulos-1-ylimino)methylamino]-1-(5-phospho-beta-D-ribosyl)imidazole-4-carboxamide. It functions in the pathway amino-acid biosynthesis; L-histidine biosynthesis; L-histidine from 5-phospho-alpha-D-ribose 1-diphosphate: step 4/9. The chain is 1-(5-phosphoribosyl)-5-[(5-phosphoribosylamino)methylideneamino] imidazole-4-carboxamide isomerase from Pseudomonas putida (strain W619).